Consider the following 195-residue polypeptide: Large ribosomal subunit protein eL15 (195 aa).

The disordered stretch occupies residues 174-195; that stretch reads GHGRLGSAKSRPSIRANGRLRR.

The protein belongs to the eukaryotic ribosomal protein eL15 family.

The protein is Large ribosomal subunit protein eL15 of Picrophilus torridus (strain ATCC 700027 / DSM 9790 / JCM 10055 / NBRC 100828 / KAW 2/3).